The sequence spans 425 residues: Beta-1,4-galactosyltransferase galt-1 (425 aa).

The Cytoplasmic segment spans residues 1 to 8 (MPRITASK). The helical; Signal-anchor for type II membrane protein transmembrane segment at 9 to 29 (IVLLIALSFCITVIYHFPIAT) threads the bilayer. The Lumenal segment spans residues 30 to 425 (RSSKEYDEYG…FDSVVGLLDL (396 aa)). Residues Asn109 and Asn152 are each glycosylated (N-linked (GlcNAc...) asparagine). The GT92 domain maps to 189-394 (KMSICVPALF…LLRVYHYKDK (206 aa)).

This sequence belongs to the glycosyltransferase 92 family. Mn(2+) is required as a cofactor. N-glycosylated. Expressed in intestine and coelomocytes.

It localises to the golgi apparatus. It is found in the golgi stack membrane. Its activity is regulated as follows. Inhibited by EDTA, Cu(2+) and Zn(2+). Its function is as follows. Catalyzes the transfer of beta-galactose from UDP-galactose to position 4 of alpha-1,6-linked fucose at the reducing end GlcNAc in N-glycan cores. Involved in susceptibility to the nematotoxic C.cinerea galectin Cgl2, likely by contributing to the synthesis of core alpha-1,6-fucosylated N-glycans to which Cgl2 binds. In Caenorhabditis elegans, this protein is Beta-1,4-galactosyltransferase galt-1.